A 199-amino-acid chain; its full sequence is Molybdenum cofactor guanylyltransferase (199 aa).

Residues 12–14 (LAG), lysine 25, asparagine 53, aspartate 71, and aspartate 101 each bind GTP. Mg(2+) is bound at residue aspartate 101.

This sequence belongs to the MobA family. As to quaternary structure, monomer. It depends on Mg(2+) as a cofactor.

The protein resides in the cytoplasm. It catalyses the reaction Mo-molybdopterin + GTP + H(+) = Mo-molybdopterin guanine dinucleotide + diphosphate. Transfers a GMP moiety from GTP to Mo-molybdopterin (Mo-MPT) cofactor (Moco or molybdenum cofactor) to form Mo-molybdopterin guanine dinucleotide (Mo-MGD) cofactor. This is Molybdenum cofactor guanylyltransferase from Cupriavidus necator (strain ATCC 17699 / DSM 428 / KCTC 22496 / NCIMB 10442 / H16 / Stanier 337) (Ralstonia eutropha).